We begin with the raw amino-acid sequence, 313 residues long: MQEKQVVNQKEQYDLNKLQKRLRRNVGQAIADFNMIEEGDRVMVCLSGGKDSYTMLDILQNLQKSAPINFTLIAVNLDQKQPGFPEDILPAYLDKQGVEYKIVEENTYGIVKEIIPEGKTTCSLCSRLRRGILYRTATELGATKIALGHHRDDILQTLFLNMFYGGKLKGMPPKLMSDDGKHVVIRPLAYCREKDIERFAIAREYPIIPCNLCGSQPNLQRQVIKDMLRDWDKQYPGRIETMFSAMQNVVPSHLNDHKLFDFKNITHNSEIVDGGDLAFDREELPLQPVSWQPEDAEDGDTQPLVRLDVLEIK.

The PP-loop motif signature appears at 47-52; the sequence is SGGKDS. Residues Cys-122, Cys-125, and Cys-213 each contribute to the [4Fe-4S] cluster site.

This sequence belongs to the TtcA family. As to quaternary structure, homodimer. Mg(2+) serves as cofactor. [4Fe-4S] cluster is required as a cofactor.

The protein resides in the cytoplasm. It catalyses the reaction cytidine(32) in tRNA + S-sulfanyl-L-cysteinyl-[cysteine desulfurase] + AH2 + ATP = 2-thiocytidine(32) in tRNA + L-cysteinyl-[cysteine desulfurase] + A + AMP + diphosphate + H(+). It participates in tRNA modification. Catalyzes the ATP-dependent 2-thiolation of cytidine in position 32 of tRNA, to form 2-thiocytidine (s(2)C32). The sulfur atoms are provided by the cysteine/cysteine desulfurase (IscS) system. This is tRNA-cytidine(32) 2-sulfurtransferase from Yersinia enterocolitica serotype O:8 / biotype 1B (strain NCTC 13174 / 8081).